Consider the following 680-residue polypeptide: DNA ligase (680 aa).

NAD(+)-binding positions include 35–39 (DAQYD), 84–85 (SL), and E115. K117 (N6-AMP-lysine intermediate) is an active-site residue. Residues R138, E174, K291, and K315 each coordinate NAD(+). 4 residues coordinate Zn(2+): C419, C422, C437, and C442. A BRCT domain is found at 601 to 680 (NKNMPFSGME…REFINMLEQS (80 aa)).

It belongs to the NAD-dependent DNA ligase family. LigA subfamily. Requires Mg(2+) as cofactor. Mn(2+) is required as a cofactor.

It carries out the reaction NAD(+) + (deoxyribonucleotide)n-3'-hydroxyl + 5'-phospho-(deoxyribonucleotide)m = (deoxyribonucleotide)n+m + AMP + beta-nicotinamide D-nucleotide.. Its function is as follows. DNA ligase that catalyzes the formation of phosphodiester linkages between 5'-phosphoryl and 3'-hydroxyl groups in double-stranded DNA using NAD as a coenzyme and as the energy source for the reaction. It is essential for DNA replication and repair of damaged DNA. This chain is DNA ligase, found in Dehalococcoides mccartyi (strain ATCC BAA-2100 / JCM 16839 / KCTC 5957 / BAV1).